Reading from the N-terminus, the 457-residue chain is Metacaspase-1 (457 aa).

A disordered region spans residues 1 to 149 (MSWNQYPGGG…PQLQGQGGQS (149 aa)). Residues 7-18 (PGGGHHQQGGYG) are compositionally biased toward gly residues. Positions 20–56 (RPPPPQWAQQGPPPPPNMGYRPPPPPQAYYNNPPPPQ) are enriched in pro residues. Residues 57–83 (QYQRPAPQQNGYQQGGYQQQQQSQGNY) are compositionally biased toward low complexity. Catalysis depends on residues His247 and Cys303.

This sequence belongs to the peptidase C14B family.

Functionally, involved in cell death (apoptosis). The protein is Metacaspase-1 (MCA1) of Cryptococcus neoformans var. neoformans serotype D (strain JEC21 / ATCC MYA-565) (Filobasidiella neoformans).